We begin with the raw amino-acid sequence, 57 residues long: UPF0391 membrane protein NE0130 (57 aa).

2 helical membrane-spanning segments follow: residues 1–21 and 33–53; these read MLKW…FGFR and FLFF…LLGI.

It belongs to the UPF0391 family.

The protein localises to the cell membrane. The chain is UPF0391 membrane protein NE0130 from Nitrosomonas europaea (strain ATCC 19718 / CIP 103999 / KCTC 2705 / NBRC 14298).